A 349-amino-acid polypeptide reads, in one-letter code: Core protein VP7 (349 aa).

N-linked (GlcNAc...) asparagine; by host glycosylation is present at Asn-45.

The protein belongs to the orbivirus VP7 family. As to quaternary structure, homotrimer.

Its subcellular location is the virion. Major structural core protein; binds to structural protein VP3. Constitutes the surface of the AHSV core. The polypeptide is Core protein VP7 (Segment-7) (Camelus dromedarius (Dromedary)).